Reading from the N-terminus, the 717-residue chain is MLVHLFRFGIRGGPVPGWSLQSLRFQTFSAARSSDDRLSSHLLRTVAQLRVQLRAHLPRAPPASHWSPSAWCWVGGTLVVPAVLWQHPRLCLIALCEAKESPPAQPTRAPELRFNWKLFWHFLHPHLLALGAAIVLALGAALVNVQIPLLLGQLVEIVAKYTRDHMGSFVSESRKLSVQLLLLYGVQGLLTFGYLVLLSHIGERMAMDMRKALFSSLLRQDIAFFDAKKTGQLVSRLTTDVQEFKSSFKLVISQGLRSCTQVIGSLVSLSMLSPRLTLMLAVVTPALMGVGTLMGSGLRKLSRQCQEQIARATGVADEALGNVRTVRAFAMEKREEERYQAELESCCCKAEELGRGIALFQGLSNIAFNCMVLGTLFIGGSLVAGQQLKGGDLMSFLVASQTVQRSMASLSVLFGQVVRGLSAGARVFEYMALSPVIPLTGGYCIPNKDIRGSITFQNVTFSYPCRPGFNVLKDFTLKLPSGKIVALVGQSGGGKTTVASLLERFYDPEAGSVTLDGHDLRTLNPSWLRGQVIGFISQEPVLFATTIMENIRFGKLDASDEEVYTAAREANAHEFISSFPDGYSTVVGERGTTLSGGQKQRLAIARALIKQPTVLILDEATSALDAESERVVQEALDRASAGRTVLVIAHRLSTVRAAHSIIVMANGQVCEAGTHEELLKKGGLYSELIRRQTLDASLTSTPPAEKPEDPKSCQSKA.

A mitochondrion-targeting transit peptide spans M1–F25. The next 4 membrane-spanning stretches (helical) occupy residues L127–I147, V178–L198, L278–L298, and N365–G385. The 288-residue stretch at A132 to R419 folds into the ABC transmembrane type-1 domain. In terms of domain architecture, ABC transporter spans I454–R691. G489–T496 contacts ATP. Positions D695–A717 are disordered.

This sequence belongs to the ABC transporter superfamily. ABCB family. Multidrug resistance exporter (TC 3.A.1.201) subfamily. The mitochondrial potassium channel (mitoK(ATP)) is composed of 4 subunits of CCDC51/MITOK and 4 subunits of ABCB8/MITOSUR. Interacts with PAAT. Interacts with NRP1; NRP1 regulates ABCB8/MITOSUR protein levels in mitochondria.

The protein localises to the mitochondrion inner membrane. With respect to regulation, channel activity inhibited by ATP via ABCB8/MITOSUR subunit. Functionally, ATP-binding subunit of the mitochondrial ATP-gated potassium channel (mitoK(ATP)). Together with pore-forming subunit CCDC51/MITOK of the mitoK(ATP) channel, mediates ATP-dependent potassium currents across the mitochondrial inner membrane. An increase in ATP intracellular levels closes the channel, inhibiting K(+) transport, whereas a decrease in ATP levels enhances K(+) uptake in the mitochondrial matrix. Plays a role in mitochondrial iron transport. Required for maintenance of normal cardiac function, possibly by influencing mitochondrial iron export and regulating the maturation of cytosolic iron sulfur cluster-containing enzymes. This Mus musculus (Mouse) protein is Mitochondrial potassium channel ATP-binding subunit.